A 69-amino-acid chain; its full sequence is Large ribosomal subunit protein uL29 (69 aa).

The protein belongs to the universal ribosomal protein uL29 family.

The sequence is that of Large ribosomal subunit protein uL29 from Polaromonas sp. (strain JS666 / ATCC BAA-500).